The following is a 152-amino-acid chain: SXP/RAL-2 family protein Ani s 5 (152 aa).

Residues 1-18 (MKTLIVAALFCTIGMALA) form the signal peptide. Necessary for IgE-binding regions lie at residues 25 to 42 (PPFL…FFEL), 49 to 54 (KTDPEI), 58 to 66 (LDAWVDTLG), and 103 to 120 (KKAD…SLNG). IgG4-binding regions lie at residues 49-68 (KTDP…LGGD) and 118-137 (LNGI…LPQS). The tract at residues 127 to 146 (IQAIYKTLPQSVKDELEKGI) is igE-binding and IgG4-binding.

This sequence belongs to the SXP/RAL-2 family. Monomer. Excretory gland, ventriculus, and the luminal epithelium of the intestine of the larvae.

The protein resides in the secreted. In Anisakis simplex (Herring worm), this protein is SXP/RAL-2 family protein Ani s 5.